Here is a 447-residue protein sequence, read N- to C-terminus: Succinate--CoA ligase [ADP-forming] subunit beta, mitochondrial (447 aa).

A mitochondrion-targeting transit peptide spans 1–34 (MFKLGRNRALASAFAATSRAPLASRLPSVSQQQR). Positions 45-287 (ADLLRQYGIG…TTQEDPDEVR (243 aa)) constitute an ATP-grasp domain. ATP is bound by residues Lys-82, 89 to 91 (GRG), and Glu-150. Residues Asn-242 and Asp-256 each contribute to the Mg(2+) site. Residues Asn-307 and 364-366 (GIV) contribute to the substrate site.

It belongs to the succinate/malate CoA ligase beta subunit family. In terms of assembly, heterodimer of an alpha and a beta subunit. Requires Mg(2+) as cofactor.

Its subcellular location is the mitochondrion. The catalysed reaction is succinate + ATP + CoA = succinyl-CoA + ADP + phosphate. Its pathway is carbohydrate metabolism; tricarboxylic acid cycle; succinate from succinyl-CoA (ligase route): step 1/1. Its function is as follows. Succinyl-CoA synthetase functions in the citric acid cycle (TCA), coupling the hydrolysis of succinyl-CoA to the synthesis of ATP and thus represents the only step of substrate-level phosphorylation in the TCA. The beta subunit provides nucleotide specificity of the enzyme and binds the substrate succinate, while the binding sites for coenzyme A and phosphate are found in the alpha subunit. This chain is Succinate--CoA ligase [ADP-forming] subunit beta, mitochondrial, found in Neurospora crassa (strain ATCC 24698 / 74-OR23-1A / CBS 708.71 / DSM 1257 / FGSC 987).